The sequence spans 180 residues: Orotate phosphoribosyltransferase (180 aa).

5-phospho-alpha-D-ribose 1-diphosphate-binding positions include Arg95, Lys96, Lys99, and 121-129; that span reads EDVTTTGGS. The orotate site is built by Thr125 and Arg153.

The protein belongs to the purine/pyrimidine phosphoribosyltransferase family. PyrE subfamily. As to quaternary structure, homodimer. Mg(2+) serves as cofactor.

It catalyses the reaction orotidine 5'-phosphate + diphosphate = orotate + 5-phospho-alpha-D-ribose 1-diphosphate. It functions in the pathway pyrimidine metabolism; UMP biosynthesis via de novo pathway; UMP from orotate: step 1/2. Catalyzes the transfer of a ribosyl phosphate group from 5-phosphoribose 1-diphosphate to orotate, leading to the formation of orotidine monophosphate (OMP). This chain is Orotate phosphoribosyltransferase, found in Methanothermobacter thermautotrophicus (strain ATCC 29096 / DSM 1053 / JCM 10044 / NBRC 100330 / Delta H) (Methanobacterium thermoautotrophicum).